Consider the following 1129-residue polypeptide: Nuclear pore complex protein 15 (1129 aa).

It belongs to the nucleoporin Nup133 family.

It is found in the nucleus envelope. Its subcellular location is the nucleus. It localises to the nuclear pore complex. Its function is as follows. Important for early nematode development. The polypeptide is Nuclear pore complex protein 15 (Caenorhabditis elegans).